The following is a 188-amino-acid chain: MPKASEIKKGFAIESNGKTLLVKDIEVTTPGGRGGAKIYKMRCTDLTTGARVDERYKSDDVVETVEMNKRAVVYSYADGDEHIFMDNEDYSQYTFKHNEVEDDMLFINEDTQGIHIILVDGSAVGLELPSSVELVIEETDPSIKGASASARTKPARFASGLVVQVPEYIATGDRVVINTAERKYMSRA.

It belongs to the elongation factor P family.

The polypeptide is Elongation factor P-like protein (Vibrio parahaemolyticus serotype O3:K6 (strain RIMD 2210633)).